A 290-amino-acid chain; its full sequence is 4-hydroxy-tetrahydrodipicolinate synthase (290 aa).

Residue T45 participates in pyruvate binding. The Proton donor/acceptor role is filled by Y133. Residue K161 is the Schiff-base intermediate with substrate of the active site. I203 lines the pyruvate pocket.

It belongs to the DapA family. Homotetramer; dimer of dimers.

The protein resides in the cytoplasm. It carries out the reaction L-aspartate 4-semialdehyde + pyruvate = (2S,4S)-4-hydroxy-2,3,4,5-tetrahydrodipicolinate + H2O + H(+). Its pathway is amino-acid biosynthesis; L-lysine biosynthesis via DAP pathway; (S)-tetrahydrodipicolinate from L-aspartate: step 3/4. In terms of biological role, catalyzes the condensation of (S)-aspartate-beta-semialdehyde [(S)-ASA] and pyruvate to 4-hydroxy-tetrahydrodipicolinate (HTPA). This is 4-hydroxy-tetrahydrodipicolinate synthase from Cellvibrio japonicus (strain Ueda107) (Pseudomonas fluorescens subsp. cellulosa).